We begin with the raw amino-acid sequence, 79 residues long: Small proline-rich protein 4 (79 aa).

The span at methionine 1–proline 26 shows a compositional bias: low complexity. A disordered region spans residues methionine 1–lysine 79. The segment covering lysine 66–lysine 79 has biased composition (polar residues).

Belongs to the cornifin (SPRR) family. Post-translationally, cross-linked to membrane proteins by transglutaminase.

The protein localises to the cytoplasm. Its subcellular location is the cell cortex. In terms of biological role, cross-linked envelope protein of keratinocytes. Involved in UV-induced cornification. The chain is Small proline-rich protein 4 (SPRR4) from Homo sapiens (Human).